Here is a 446-residue protein sequence, read N- to C-terminus: tRNA modification GTPase MnmE (446 aa).

Positions 22, 80, and 119 each coordinate (6S)-5-formyl-5,6,7,8-tetrahydrofolate. One can recognise a TrmE-type G domain in the interval 215 to 370 (GLSLVIAGRP…LKKVIKQVVG (156 aa)). K(+) is bound at residue Asn225. GTP contacts are provided by residues 225 to 230 (NAGKST), 244 to 250 (TEIAGTT), and 269 to 272 (DTAG). Ser229 lines the Mg(2+) pocket. Residues Thr244, Ile246, and Thr249 each contribute to the K(+) site. Thr250 contributes to the Mg(2+) binding site. Lys446 contacts (6S)-5-formyl-5,6,7,8-tetrahydrofolate.

Belongs to the TRAFAC class TrmE-Era-EngA-EngB-Septin-like GTPase superfamily. TrmE GTPase family. Homodimer. Heterotetramer of two MnmE and two MnmG subunits. It depends on K(+) as a cofactor.

Its subcellular location is the cytoplasm. Its function is as follows. Exhibits a very high intrinsic GTPase hydrolysis rate. Involved in the addition of a carboxymethylaminomethyl (cmnm) group at the wobble position (U34) of certain tRNAs, forming tRNA-cmnm(5)s(2)U34. The sequence is that of tRNA modification GTPase MnmE from Legionella pneumophila (strain Paris).